A 110-amino-acid chain; its full sequence is MGVKMLLIFGLLILAMVAKSVNATYPLTKSCINGQGCIGEDDELESLMDSETNRRQLARGRRYIGYDALKKNNVPCSRRGRSYYDCKKRRRNNPYRRGCSAITHCYRYAR.

A signal peptide spans 1-23; that stretch reads MGVKMLLIFGLLILAMVAKSVNA. Residues 24–58 constitute a propeptide, removed in mature form; sequence TYPLTKSCINGQGCIGEDDELESLMDSETNRRQLA. 2 disulfide bridges follow: cysteine 76–cysteine 86 and cysteine 99–cysteine 105.

Belongs to the plant rapid alkalinization factor (RALF) family. Proteolytically cleaved, probably by S1P, a subtilisin-like serine protease (subtilase).

It localises to the secreted. Cell signaling peptide that may regulate plant stress, growth, and development. Mediates a rapid alkalinization of extracellular space by mediating a transient increase in the cytoplasmic Ca(2+) concentration leading to a calcium-dependent signaling events through a cell surface receptor and a concomitant activation of some intracellular mitogen-activated protein kinases. In Arabidopsis thaliana (Mouse-ear cress), this protein is Protein RALF-like 4 (RALFL4).